Consider the following 33-residue polypeptide: Kunitz-type serine protease inhibitor hainantoxin F7-25.66 (33 aa).

In terms of domain architecture, BPTI/Kunitz inhibitor spans 4–33 (CRLPSDRGRCKASFERWYFNGRTCAKFIYG).

The protein belongs to the venom Kunitz-type family. 02 (native) subfamily. As to expression, expressed by the venom gland.

The protein localises to the secreted. Its function is as follows. Serine protease inhibitor that inhibits trypsin at a molar ratio of 1:1. The polypeptide is Kunitz-type serine protease inhibitor hainantoxin F7-25.66 (Cyriopagopus hainanus (Chinese bird spider)).